The chain runs to 407 residues: Zinc finger protein 174 (407 aa).

The interval 1-20 is disordered; sequence MAAKMEITLSSNTEASSKQE. Residue Lys-26 forms a Glycyl lysine isopeptide (Lys-Gly) (interchain with G-Cter in SUMO2) linkage. The region spanning 59 to 124 is the SCAN box domain; that stretch reads GPQEALSQLR…KEIVTLVEDF (66 aa). The segment at 150 to 270 is disordered; that stretch reads GSQLGEQELP…RRQVSSPNAQ (121 aa). A Glycyl lysine isopeptide (Lys-Gly) (interchain with G-Cter in SUMO2) cross-link involves residue Lys-204. Residues 211–221 show a composition bias toward basic and acidic residues; the sequence is PRMRSDNKENP. Glycyl lysine isopeptide (Lys-Gly) (interchain with G-Cter in SUMO2) cross-links involve residues Lys-230 and Lys-271. C2H2-type zinc fingers lie at residues 326–348, 354–376, and 382–405; these read YKCD…KRVH, YTCG…QRIH, and YQCG…RLHH.

The protein belongs to the krueppel C2H2-type zinc-finger protein family. In terms of assembly, homodimer. As to expression, expressed in a variety of organs, but most strongly in adult testis and ovary followed by small intestine, colon, prostate, thymus, spleen, pancreas, skeletal muscle, heart, brain and kidney. Also expressed in umbilical vein endothelial cells, foreskin fibroblast and Hep-G2 cells.

It is found in the nucleus. Transcriptional repressor. The chain is Zinc finger protein 174 (ZNF174) from Homo sapiens (Human).